The sequence spans 257 residues: Paired box protein 1 homolog (257 aa).

Low complexity predominate over residues 26 to 37; sequence TTPSSTSTTPSS. The interval 26–58 is disordered; the sequence is TTPSSTSTTPSSDNGIQQYSSISTSSGYAPANS. Residues 38–52 show a composition bias toward polar residues; the sequence is DNGIQQYSSISTSSG. A DNA-binding region (paired) is located at residues 61-187; the sequence is KTAEVNQLGG…SSISRILRNK (127 aa). A PAI subdomain region spans residues 64 to 120; that stretch reads EVNQLGGVFVNGRPLPFEMRCKIVELSRQGTRPCDISRQLKISHGCVSKILTRFSEN. An RED subdomain region spans residues 139–187; that stretch reads KVVEYIRSLKRSDPGIFAWEIRDRLISADICDRANLPSVSSISRILRNK.

The protein resides in the nucleus. In terms of biological role, transcription factor. May play a role in pharyngeal cell differentiation. May have a protective role in response to infection by the Gram-negative bacterium Vibrio cholerae. This chain is Paired box protein 1 homolog, found in Caenorhabditis elegans.